We begin with the raw amino-acid sequence, 53 residues long: uncharacterized protein (53 aa).

It belongs to the ELIP/psbS family.

Its subcellular location is the plastid. It localises to the chloroplast. Its function is as follows. Possible role in chlorophyll and/or carotenoid binding. This is an uncharacterized protein from Guillardia theta (Cryptophyte).